A 412-amino-acid chain; its full sequence is Putative competence-damage inducible protein (412 aa).

It belongs to the CinA family.

The protein is Putative competence-damage inducible protein of Clostridium perfringens (strain ATCC 13124 / DSM 756 / JCM 1290 / NCIMB 6125 / NCTC 8237 / Type A).